We begin with the raw amino-acid sequence, 344 residues long: Glycerol-3-phosphate dehydrogenase [NAD(P)+] (344 aa).

Ser-11, Trp-12, His-32, Arg-33, and Lys-105 together coordinate NADPH. The sn-glycerol 3-phosphate site is built by Lys-105, Gly-135, and Ser-137. Ala-139 serves as a coordination point for NADPH. Positions 190, 243, 253, 254, and 255 each coordinate sn-glycerol 3-phosphate. Lys-190 serves as the catalytic Proton acceptor. Arg-254 provides a ligand contact to NADPH. Val-278 and Glu-280 together coordinate NADPH.

It belongs to the NAD-dependent glycerol-3-phosphate dehydrogenase family.

The protein resides in the cytoplasm. It carries out the reaction sn-glycerol 3-phosphate + NAD(+) = dihydroxyacetone phosphate + NADH + H(+). The enzyme catalyses sn-glycerol 3-phosphate + NADP(+) = dihydroxyacetone phosphate + NADPH + H(+). Its pathway is membrane lipid metabolism; glycerophospholipid metabolism. Functionally, catalyzes the reduction of the glycolytic intermediate dihydroxyacetone phosphate (DHAP) to sn-glycerol 3-phosphate (G3P), the key precursor for phospholipid synthesis. This Oceanobacillus iheyensis (strain DSM 14371 / CIP 107618 / JCM 11309 / KCTC 3954 / HTE831) protein is Glycerol-3-phosphate dehydrogenase [NAD(P)+].